Consider the following 397-residue polypeptide: Elongation factor Tu (397 aa).

Residues 10–207 (KPHVNVGTIG…TLDSYIPEPV (198 aa)) enclose the tr-type G domain. Positions 19–26 (GHVDHGKT) are G1. 19–26 (GHVDHGKT) provides a ligand contact to GTP. Residue Thr26 coordinates Mg(2+). The segment at 60-64 (GITIN) is G2. Position 77 is a phosphotyrosine (Tyr77). The G3 stretch occupies residues 81-84 (DCPG). 81 to 85 (DCPGH) lines the GTP pocket. At Tyr88 the chain carries Phosphotyrosine. Position 136–139 (136–139 (NKAD)) interacts with GTP. Residues 136 to 139 (NKAD) form a G4 region. Residues 174–176 (SAL) are G5.

This sequence belongs to the TRAFAC class translation factor GTPase superfamily. Classic translation factor GTPase family. EF-Tu/EF-1A subfamily. Monomer.

It is found in the cytoplasm. It carries out the reaction GTP + H2O = GDP + phosphate + H(+). In terms of biological role, GTP hydrolase that promotes the GTP-dependent binding of aminoacyl-tRNA to the A-site of ribosomes during protein biosynthesis. The chain is Elongation factor Tu from Pseudomonas aeruginosa (strain UCBPP-PA14).